The chain runs to 506 residues: Galactose/methyl galactoside import ATP-binding protein MglA (506 aa).

ABC transporter domains lie at 14–249 (LTMT…VGRE) and 260–506 (VPKE…AKYL). 46 to 53 (GENGAGKS) contacts ATP.

This sequence belongs to the ABC transporter superfamily. Galactose/methyl galactoside importer (TC 3.A.1.2.3) family. As to quaternary structure, the complex is composed of one ATP-binding protein (MglA), two transmembrane proteins (MglC) and a solute-binding protein (MglB).

The protein resides in the cell inner membrane. It catalyses the reaction D-galactose(out) + ATP + H2O = D-galactose(in) + ADP + phosphate + H(+). It carries out the reaction methyl beta-D-galactoside(out) + ATP + H2O = methyl beta-D-galactoside(in) + ADP + phosphate + H(+). Functionally, part of the ABC transporter complex MglABC involved in galactose/methyl galactoside import. Responsible for energy coupling to the transport system. This is Galactose/methyl galactoside import ATP-binding protein MglA from Haemophilus influenzae (strain 86-028NP).